A 380-amino-acid polypeptide reads, in one-letter code: uncharacterized protein (380 aa).

2 disordered regions span residues 278 to 323 (AATI…PRVA) and 345 to 368 (SLPG…RPRR). Over residues 301-319 (RNGPRRPARRGTSRGRRCA) the composition is skewed to basic residues.

This is an uncharacterized protein from Mycobacterium tuberculosis (strain CDC 1551 / Oshkosh).